A 404-amino-acid polypeptide reads, in one-letter code: Probable thioredoxin reductase ARB_06224 (404 aa).

Positions 1-22 (MGVQRLALALIAFTSALTSVIA) are cleaved as a signal peptide. Residue 67-75 (DEGIYRNGA) participates in FAD binding. A disulfide bond links Cys-172 and Cys-175. A glycan (N-linked (GlcNAc...) asparagine) is linked at Asn-213. 334-343 (DANNDGSTNG) lines the FAD pocket.

The protein belongs to the class-II pyridine nucleotide-disulfide oxidoreductase family. Homodimer. FAD serves as cofactor.

The protein resides in the secreted. It carries out the reaction [thioredoxin]-dithiol + NADP(+) = [thioredoxin]-disulfide + NADPH + H(+). The sequence is that of Probable thioredoxin reductase ARB_06224 from Arthroderma benhamiae (strain ATCC MYA-4681 / CBS 112371) (Trichophyton mentagrophytes).